We begin with the raw amino-acid sequence, 138 residues long: Glia maturation factor (138 aa).

Positions 3 to 138 (DNQICDISNE…TEEWLKAKLK (136 aa)) constitute an ADF-H domain.

Belongs to the actin-binding proteins ADF family. GMF subfamily. As to expression, in ovaries, expressed in follicular epithelium, in polar cells, migrating border cells, and centripedal cells (at protein level).

The protein resides in the cell projection. It is found in the lamellipodium. Its subcellular location is the cytoplasm. The protein localises to the perinuclear region. It localises to the nucleus. The protein resides in the cell cortex. In terms of biological role, inhibits Arp2/3-mediated actin nucleation. Together with flr, promotes Arp2/3-nucleated actin filament array disassembly. Promotes debranching. Regulates lamellipodial protrusion dynamics possibly by facilitating lamellipodial retraction. In egg chambers, enhances the retraction dynamics of cellular extensions in border cells and thus together with flr plays an important role in directional migration of border cell clusters. In Drosophila melanogaster (Fruit fly), this protein is Glia maturation factor.